Reading from the N-terminus, the 896-residue chain is Chromatin assembly factor 1 subunit A-A (896 aa).

3 disordered regions span residues 1 to 23 (MPGKEAAVNVMQSSTKSNTKKMV), 185 to 377 (TSTS…EEEK), and 552 to 610 (DSDE…DPEN). Residues 10 to 21 (VMQSSTKSNTKK) are compositionally biased toward polar residues. The segment covering 211-226 (ASVSSSSSPVSLSSPD) has biased composition (low complexity). The segment covering 227–236 (AQTGSQFRNR) has biased composition (polar residues). A compositionally biased stretch (low complexity) spans 237 to 246 (SSPSTSTTPT). Over residues 255–284 (SADKNKTKDKDKQRQAEKEERERAKKEARS) the composition is skewed to basic and acidic residues. A compositionally biased stretch (basic residues) spans 285–302 (AKKKKRQGLLKNLQRKRG). The segment covering 308-377 (SGKEYKKEKK…EEKRLKEEEK (70 aa)) has biased composition (basic and acidic residues). Acidic residues-rich tracts occupy residues 552–563 (DSDEEWEEEEPG), 572–586 (ENDDDPKEDDEDDDG), and 595–607 (SDDEGVSDEECTD). Residues 642–678 (CVWWDSKASEISLLQKFSACILESPAVDEELAQEISS) form a necessary for homodimerization, competence for chromatin assembly region. Positions 724 to 743 (SDAAGNESTSPNVTPQTPSN) are disordered. Residues 729 to 743 (NESTSPNVTPQTPSN) are compositionally biased toward polar residues.

The protein belongs to the CHAF1A family. In terms of assembly, homodimer.

Its subcellular location is the nucleus. In terms of biological role, involved in chromatin assembly in DNA replication and DNA repair. The chain is Chromatin assembly factor 1 subunit A-A (chaf1a-a) from Xenopus laevis (African clawed frog).